A 408-amino-acid chain; its full sequence is MHKKTLLATLILGLLAGQAVAAPYLPLASDHRNGEVQTASNAWLEVDLGAFEHNIQTLKDRLGDKGPKICAIMKADAYGHGIDLLVPSVVKAGIPCIGIASNEEARVAREKGFTGRLMRVRAATPAEVEQALPYKMEELIGSLVSAQGIADIAQRHHTNIPVHIALNSAGMSRNGIDLRLADSKEDALAMLKLKGITPVGIMTHFPVEEKEDVKMGLAQFKLDSQWLLEAGKLDRSKITIHAANSFATLEVPDAYFDMVRPGGLLYGDSIPSYTEYKRVMAFKTQVASVNHYPAGNTVGYDRTFTLKRDSWLANLPLGYSDGYRRALSNKAYVLIQGQKVPVVGKTSMNTIMVDVTDLKGVKPGDEVVLFGRQGEAEVKQADLEEYNGALLADMYTIWGYTNPKKIKR.

Positions 1–21 (MHKKTLLATLILGLLAGQAVA) are cleaved as a signal peptide. Cys-70 and Cys-96 are joined by a disulfide. The active-site Proton acceptor is the Lys-74. N6-(pyridoxal phosphate)lysine is present on Lys-74. Arg-173 contributes to the substrate binding site. The Proton acceptor role is filled by Tyr-300. Met-348 provides a ligand contact to substrate.

This sequence belongs to the alanine racemase family. Bsr subfamily. Homodimer. It depends on pyridoxal 5'-phosphate as a cofactor.

The protein resides in the periplasm. It catalyses the reaction an L-alpha-amino acid = a D-alpha-amino acid. It carries out the reaction L-lysine = D-lysine. The catalysed reaction is L-arginine = D-arginine. The enzyme catalyses L-alanine = D-alanine. It catalyses the reaction L-serine = D-serine. It carries out the reaction L-methionine = D-methionine. The catalysed reaction is L-leucine = D-leucine. The enzyme catalyses L-cysteine = D-cysteine. It catalyses the reaction L-glutamine = D-glutamine. It carries out the reaction L-asparagine = D-asparagine. The catalysed reaction is L-histidine = D-histidine. In terms of biological role, amino-acid racemase able to utilize a broad range of substrates. Reversibly racemizes ten of the 19 natural chiral amino acids known, including both non-beta-branched aliphatic amino acids (Ala, Leu, Met, Ser, Cys, Gln and Asn) and positively charged amino acids (His, Lys and Arg). Is not active on negatively charged (Glu and Asp) or aromatic (Tyr, Trp and Phe) amino acids and displays minimal activity towards beta-branched aliphatic (Ile, Val and Thr) substrates. Enables bacteria to produce and release extracellular non-canonical D-amino acids (NCDAAs) that regulate diverse cellular processes. The chain is Broad specificity amino-acid racemase from Aeromonas hydrophila subsp. hydrophila (strain ATCC 7966 / DSM 30187 / BCRC 13018 / CCUG 14551 / JCM 1027 / KCTC 2358 / NCIMB 9240 / NCTC 8049).